A 94-amino-acid polypeptide reads, in one-letter code: Co-chaperonin GroES (94 aa).

Belongs to the GroES chaperonin family. As to quaternary structure, heptamer of 7 subunits arranged in a ring. Interacts with the chaperonin GroEL.

It localises to the cytoplasm. Its function is as follows. Together with the chaperonin GroEL, plays an essential role in assisting protein folding. The GroEL-GroES system forms a nano-cage that allows encapsulation of the non-native substrate proteins and provides a physical environment optimized to promote and accelerate protein folding. GroES binds to the apical surface of the GroEL ring, thereby capping the opening of the GroEL channel. The polypeptide is Co-chaperonin GroES (Halothermothrix orenii (strain H 168 / OCM 544 / DSM 9562)).